We begin with the raw amino-acid sequence, 452 residues long: Isocitrate dehydrogenase [NADP], mitochondrial (452 aa).

A mitochondrion-targeting transit peptide spans 1-39; it reads MAGYLRAVSSLCRASGSARTWAPAALTVPSWPEQPRRHY. Lys45, Lys48, Lys67, and Lys69 each carry N6-acetyllysine. 2 positions are modified to N6-acetyllysine; alternate: Lys80 and Lys106. Lys80 and Lys106 each carry N6-succinyllysine; alternate. Residues 115–117 and Arg122 each bind NADP(+); that span reads TIT. Thr117 contacts D-threo-isocitrate. Residues 134 to 140 and Arg149 contribute to the D-threo-isocitrate site; that span reads SPNGTIR. Lys155 is subject to N6-acetyllysine. Lys166 carries the post-translational modification N6-acetyllysine; alternate. Lys166 is modified (N6-succinyllysine; alternate). Arg172 contributes to the D-threo-isocitrate binding site. Residues Lys180 and Lys193 each carry the N6-acetyllysine; alternate modification. N6-succinyllysine; alternate occurs at positions 180 and 193. Lys199 carries the post-translational modification N6-acetyllysine. Lys256 bears the N6-acetyllysine; alternate mark. Lys256 carries the N6-succinyllysine; alternate modification. Lys263, Lys272, Lys275, and Lys280 each carry N6-acetyllysine. N6-acetyllysine; alternate is present on Lys282. Lys282 carries the N6-succinyllysine; alternate modification. Asp291 provides a ligand contact to Mn(2+). Lys299 contacts NADP(+). Residue Asp314 coordinates Mn(2+). Residues 349-354 and Asn367 each bind NADP(+); that span reads GTVTRH. Lys384 carries the post-translational modification N6-acetyllysine; alternate. Lys384 carries the post-translational modification N6-succinyllysine; alternate. An N6-acetyllysine mark is found at Lys400, Lys413, and Lys442.

It belongs to the isocitrate and isopropylmalate dehydrogenases family. In terms of assembly, homodimer. It depends on Mg(2+) as a cofactor. Mn(2+) is required as a cofactor. Post-translationally, acetylation at Lys-413 dramatically reduces catalytic activity. Deacetylated by SIRT3. As to expression, predominantly expressed in heart, liver and kidney. Expressed in activated B lymphocytes.

The protein localises to the mitochondrion. It carries out the reaction D-threo-isocitrate + NADP(+) = 2-oxoglutarate + CO2 + NADPH. Functionally, plays a role in intermediary metabolism and energy production. It may tightly associate or interact with the pyruvate dehydrogenase complex. The chain is Isocitrate dehydrogenase [NADP], mitochondrial (Idh2) from Mus musculus (Mouse).